The chain runs to 570 residues: Formate--tetrahydrofolate ligase (570 aa).

Position 65 to 72 (65 to 72 (TPHGEGKT)) interacts with ATP.

It belongs to the formate--tetrahydrofolate ligase family.

It carries out the reaction (6S)-5,6,7,8-tetrahydrofolate + formate + ATP = (6R)-10-formyltetrahydrofolate + ADP + phosphate. The protein operates within one-carbon metabolism; tetrahydrofolate interconversion. The sequence is that of Formate--tetrahydrofolate ligase from Shewanella putrefaciens (strain CN-32 / ATCC BAA-453).